The sequence spans 349 residues: Two pore potassium channel b (349 aa).

The interval 1 to 53 (MAALDQQPLLHDGGDQKPPPEGAARRFRRCRTAPSSEPPPTDKDNSSAADAPP) is disordered. At 1 to 66 (MAALDQQPLL…FTGGGRPSFR (66 aa)) the chain is on the cytoplasmic side. Residues 67-87 (LVGLLLVAYLLLGTIAFYLAM) traverse the membrane as a helical segment. Positions 100–119 (DALYFCVVTMTTVGYGDLVP) form an intramembrane region, pore-forming. The helical transmembrane segment at 123–143 (AAKLLACAFVFAGVAVVGTFL) threads the bilayer. The Cytoplasmic portion of the chain corresponds to 144 to 180 (SKAADYLVEKQEALLFRALHSHTMVRAMEMNKVRYKL). Residues 181-201 (YTAGLLLVAAVASGTVVLWKV) traverse the membrane as a helical segment. Positions 208–227 (DAFYCVCATVTTLGYGDRSF) form an intramembrane region, pore-forming. The chain crosses the membrane as a helical span at residues 234-254 (AFAVAWITVSTVVVALFFLYA). Over 255–349 (AELYTERRQR…PTPDPPPSLR (95 aa)) the chain is Cytoplasmic. EF-hand domains follow at residues 271–306 (LRRR…ELGK) and 310–345 (EDIS…PDPP). Ca(2+) contacts are provided by Asp-284, Asp-286, Asp-288, Arg-290, Asp-295, Asp-323, Asp-325, Ser-327, Thr-329, and Asp-334. Residues 326-349 (HSGTLSPADLAAAQPTPDPPPSLR) form a disordered region.

Belongs to the two pore domain potassium channel (TC 1.A.1.7) family. In terms of assembly, homodimer.

The protein resides in the vacuole membrane. Highly selective inward-rectifying potassium channel that is specifically located in the tonoplast of protein storage vacuoles. Functions independently of the voltage difference across the membrane. This is Two pore potassium channel b (TPKB) from Oryza sativa subsp. japonica (Rice).